Reading from the N-terminus, the 128-residue chain is Fluoride-specific ion channel FluC 2 (128 aa).

The next 4 helical transmembrane spans lie at 13-35 (ALVA…AIAG), 40-59 (LAAN…EAAA), 71-93 (LLGT…TAGL), and 97-119 (WMAA…GRAI).

Belongs to the fluoride channel Fluc/FEX (TC 1.A.43) family.

Its subcellular location is the cell membrane. It catalyses the reaction fluoride(in) = fluoride(out). Functionally, fluoride-specific ion channel. Important for reducing fluoride concentration in the cell, thus reducing its toxicity. The sequence is that of Fluoride-specific ion channel FluC 2 from Halobacterium salinarum (strain ATCC 700922 / JCM 11081 / NRC-1) (Halobacterium halobium).